A 284-amino-acid chain; its full sequence is Pantothenate synthetase (284 aa).

ATP is bound at residue 30-37; it reads MGNLHDGH. H37 acts as the Proton donor in catalysis. Q61 serves as a coordination point for (R)-pantoate. Q61 contacts beta-alanine. 149–152 contributes to the ATP binding site; sequence GEKD. Q155 lines the (R)-pantoate pocket. Residues I178 and 186 to 189 each bind ATP; that span reads LSSR.

This sequence belongs to the pantothenate synthetase family. As to quaternary structure, homodimer.

The protein resides in the cytoplasm. It carries out the reaction (R)-pantoate + beta-alanine + ATP = (R)-pantothenate + AMP + diphosphate + H(+). Its pathway is cofactor biosynthesis; (R)-pantothenate biosynthesis; (R)-pantothenate from (R)-pantoate and beta-alanine: step 1/1. Functionally, catalyzes the condensation of pantoate with beta-alanine in an ATP-dependent reaction via a pantoyl-adenylate intermediate. The chain is Pantothenate synthetase from Salmonella choleraesuis (strain SC-B67).